Reading from the N-terminus, the 273-residue chain is Large ribosomal subunit protein uL2 (273 aa).

Disordered stretches follow at residues 28-53 (KPFA…TTRH) and 221-273 (RGTA…RRSK). Residues 39 to 48 (KSGGRNNNGR) show a composition bias toward low complexity.

Belongs to the universal ribosomal protein uL2 family. Part of the 50S ribosomal subunit. Forms a bridge to the 30S subunit in the 70S ribosome.

In terms of biological role, one of the primary rRNA binding proteins. Required for association of the 30S and 50S subunits to form the 70S ribosome, for tRNA binding and peptide bond formation. It has been suggested to have peptidyltransferase activity; this is somewhat controversial. Makes several contacts with the 16S rRNA in the 70S ribosome. The polypeptide is Large ribosomal subunit protein uL2 (Enterobacter sp. (strain 638)).